Consider the following 746-residue polypeptide: MEHTYQYSWIIPFIPLPVPILLGVGLLLFPTATKNLRRMWTFLSIFLLSIVMIFALYLSIQQIILSCIHQNVWSWTINNEFSFEFGYFIDPLTSIMSILITTVGILVLIYSDNYMSHDQGYLRFFAYMGFFNTSMLGLVTSSNLIQVYFFWELVGMCSYLLIGFWFTRPIAANACQKAFVTNRVGDFGLLLGILGLYWITGSFEFQDLFEIFNNLILNNRVNFLFLTLCAFLLFVGPIAKSAQFPLHVWLPDAMEGPTPISALIHAATMVAAGIFLVARLLPLFIVIPSIMYIISLIGIITVLLGATLALAQKDIKRGLAYSTMSQLGYMMLALGMGSYRSALFHLITHAYSKALLFLGSGSIIHSMEAIVGYSPDKSQNMILMGGLTKHVPITKTAFLVGTLSLCGIPPLACFWSKDEILNDSLLFSPIFAIIACSTAGLTAFYMFRIYLLTFEGHLNTYFINYSGKKSSSFYSISLWGKEEEKKLNRNFGLVPLLTMNNTKRASFFYKKTYKISNNVRNQTFITVENFGLNTRTFYYPQESDNTILFPMLVLLLFTLFIGAIGIPFNQEGIDFDILSKLFTPSINLLHKNSQSFVDWYEFLRNATFSVSIAFFGIFIAYCLYKPFYSSLLNLTLLNSFQKWNSKRIRWEKLINFVYNWSYNRGYIDAFFKTSLIESIRRLAKLTNFFDKRIIDGITNGVGITSFFVGEVTKYIGGSRVSSYLFLYLSYVLIFLTILFFFYFEKF.

Transmembrane regions (helical) follow at residues 9–29 (WIIP…LLLF), 40–60 (WTFL…YLSI), 89–109 (IDPL…LVLI), 125–145 (FAYM…SNLI), 147–167 (VYFF…FWFT), 185–205 (GDFG…SFEF), 221–241 (VNFL…IAKS), 258–278 (TPIS…FLVA), 280–300 (LLPL…IGII), 327–347 (LGYM…FHLI), 354–374 (ALLF…VGYS), 396–416 (TAFL…CFWS), 425–445 (LLFS…TAFY), 547–567 (ILFP…IGIP), 608–628 (FSVS…KPFY), and 723–743 (YLFL…FFYF).

This sequence belongs to the complex I subunit 5 family. NDH is composed of at least 16 different subunits, 5 of which are encoded in the nucleus.

The protein resides in the plastid. It localises to the chloroplast thylakoid membrane. It catalyses the reaction a plastoquinone + NADH + (n+1) H(+)(in) = a plastoquinol + NAD(+) + n H(+)(out). The catalysed reaction is a plastoquinone + NADPH + (n+1) H(+)(in) = a plastoquinol + NADP(+) + n H(+)(out). In terms of biological role, NDH shuttles electrons from NAD(P)H:plastoquinone, via FMN and iron-sulfur (Fe-S) centers, to quinones in the photosynthetic chain and possibly in a chloroplast respiratory chain. The immediate electron acceptor for the enzyme in this species is believed to be plastoquinone. Couples the redox reaction to proton translocation, and thus conserves the redox energy in a proton gradient. The protein is NAD(P)H-quinone oxidoreductase subunit 5, chloroplastic (ndhF) of Barbarea verna (Land cress).